The chain runs to 416 residues: Gamma-glutamyl phosphate reductase (416 aa).

The protein belongs to the gamma-glutamyl phosphate reductase family.

It localises to the cytoplasm. The catalysed reaction is L-glutamate 5-semialdehyde + phosphate + NADP(+) = L-glutamyl 5-phosphate + NADPH + H(+). The protein operates within amino-acid biosynthesis; L-proline biosynthesis; L-glutamate 5-semialdehyde from L-glutamate: step 2/2. Functionally, catalyzes the NADPH-dependent reduction of L-glutamate 5-phosphate into L-glutamate 5-semialdehyde and phosphate. The product spontaneously undergoes cyclization to form 1-pyrroline-5-carboxylate. This is Gamma-glutamyl phosphate reductase from Vibrio atlanticus (strain LGP32) (Vibrio splendidus (strain Mel32)).